The sequence spans 85 residues: RNA-binding protein KhpA (85 aa).

The 54-residue stretch at 32-85 (YLEYNLTVNPEDIGRVIGRQGRVASAIRTIVYSVRVSGPKRVRLTIEDGQQKNS) folds into the KH domain.

It belongs to the KhpA RNA-binding protein family. As to quaternary structure, forms a complex with KhpB.

Its subcellular location is the cytoplasm. A probable RNA chaperone. Forms a complex with KhpB which binds to cellular RNA and controls its expression. Plays a role in peptidoglycan (PG) homeostasis and cell length regulation. Functionally, necessary for correct cell elongation. This chain is RNA-binding protein KhpA, found in Lactiplantibacillus plantarum (strain ATCC BAA-793 / NCIMB 8826 / WCFS1) (Lactobacillus plantarum).